The following is a 380-amino-acid chain: Cytochrome b (380 aa).

Transmembrane regions (helical) follow at residues 34-54 (FGSL…LLAM), 78-99 (WLIR…FLHI), 114-134 (WNTG…GYVL), and 179-199 (FFAL…THLM). Heme b contacts are provided by histidine 84 and histidine 98. Histidine 183 and histidine 197 together coordinate heme b. Histidine 202 is a binding site for a ubiquinone. 4 helical membrane passes run 227-247 (LKDI…ALFS), 289-309 (LGGV…PFLH), 321-341 (LSQA…WVGS), and 348-368 (FIII…SLLP).

This sequence belongs to the cytochrome b family. As to quaternary structure, the cytochrome bc1 complex contains 11 subunits: 3 respiratory subunits (MT-CYB, CYC1 and UQCRFS1), 2 core proteins (UQCRC1 and UQCRC2) and 6 low-molecular weight proteins (UQCRH/QCR6, UQCRB/QCR7, UQCRQ/QCR8, UQCR10/QCR9, UQCR11/QCR10 and a cleavage product of UQCRFS1). This cytochrome bc1 complex then forms a dimer. Heme b serves as cofactor.

It localises to the mitochondrion inner membrane. Component of the ubiquinol-cytochrome c reductase complex (complex III or cytochrome b-c1 complex) that is part of the mitochondrial respiratory chain. The b-c1 complex mediates electron transfer from ubiquinol to cytochrome c. Contributes to the generation of a proton gradient across the mitochondrial membrane that is then used for ATP synthesis. The chain is Cytochrome b (MT-CYB) from Crossoptilon crossoptilon (White-eared pheasant).